A 636-amino-acid chain; its full sequence is ATP-dependent zinc metalloprotease FtsH (636 aa).

Over 1–12 the chain is Cytoplasmic; that stretch reads MKKLLENLSLWM. The chain crosses the membrane as a helical span at residues 13–33; sequence GIIILVTLLFGQVALNFGFGI. The Periplasmic portion of the chain corresponds to 34 to 104; sequence RNEKIQFSEF…VASGDSFLGL (71 aa). The chain crosses the membrane as a helical span at residues 105–125; that stretch reads LFNILISWFPMLLLIGVWIFF. The Cytoplasmic portion of the chain corresponds to 126-636; that stretch reads MKQMQAGGNK…ESDLDTGDKE (511 aa). 197-204 lines the ATP pocket; that stretch reads GPPGTGKT. Residue H419 participates in Zn(2+) binding. Residue E420 is part of the active site. The Zn(2+) site is built by H423 and D497.

This sequence in the central section; belongs to the AAA ATPase family. The protein in the C-terminal section; belongs to the peptidase M41 family. In terms of assembly, homohexamer. Zn(2+) is required as a cofactor.

The protein localises to the cell inner membrane. Its function is as follows. Acts as a processive, ATP-dependent zinc metallopeptidase for both cytoplasmic and membrane proteins. Plays a role in the quality control of integral membrane proteins. This chain is ATP-dependent zinc metalloprotease FtsH, found in Neorickettsia risticii (strain Illinois).